We begin with the raw amino-acid sequence, 532 residues long: MRPSTASTPLSSSALNYLESFERNAKALRGNNNGSSTSGGNKKDESSTSKSIVSSPAPVKRRVSISDIISQARRQVSLSRTDSEDFDFLNESLKSSVFDESVSSDTDSEESHEEKRILPLGTPGQQVGRKSLKDIRELRNSIDQSLIKPPELKMLRSKAAGEESKRHAHFESIQEEEKISEDLPTAQLPSKSPFKKAIQSGSESSDSDSIIFDEVFEEVLPSPPRKPAPARTAPIVVEKKIEKPAVKEQKARKKKEKTPTPTESSFESSSDSSSTSESSTSSESSSSASESESESKSESQVSSSKTSTSKASSSKAYGSDFESEKSSSSSASTISKVTPKKLDKPQKTKKPDKKRAKPDDIRQNKKPEPIPYEDFIPKLSSRSSNSEKSTVRETNRTLEESLKKTLKINKSSEKMEKPRKDIRRAPRSSSSSSSTLRDAEREQDIERRREKRARRFRSRRRRSEEPHTCQENIHNMIESVIDTHVQMLDDFNRMEYAAVCEWTQVLRKFDGHDGPSSQKLREIIERRLNRKY.

Disordered regions lie at residues 26–84 (KALR…TDSE), 97–129 (VFDE…QVGR), and 157–470 (SKAA…HTCQ). The span at 30 to 40 (GNNNGSSTSGG) shows a compositional bias: low complexity. Over residues 67–80 (DIISQARRQVSLSR) the composition is skewed to polar residues. The segment covering 157–181 (SKAAGEESKRHAHFESIQEEEKISE) has biased composition (basic and acidic residues). The span at 198 to 213 (IQSGSESSDSDSIIFD) shows a compositional bias: low complexity. Positions 237 to 249 (VEKKIEKPAVKEQ) are enriched in basic and acidic residues. 3 stretches are compositionally biased toward low complexity: residues 259 to 290 (PTPT…SASE), 298 to 315 (ESQV…SSSK), and 326 to 335 (SSSSSASTIS). Residues 347 to 356 (KTKKPDKKRA) are compositionally biased toward basic residues. Basic and acidic residues-rich tracts occupy residues 357-368 (KPDDIRQNKKPE), 389-403 (STVR…ESLK), 410-419 (KSSEKMEKPR), and 437-448 (RDAEREQDIERR). Basic residues predominate over residues 449 to 461 (REKRARRFRSRRR).

This is an uncharacterized protein from Caenorhabditis elegans.